Reading from the N-terminus, the 616-residue chain is Heme A synthase-mitochondrial ferredoxin fusion protein (616 aa).

The transit peptide at 1-45 (MNISRSSGLMRQFLLQPLRKGCDISCLGRSSWRMSRSFSGSSVLN) directs the protein to the mitochondrion. A heme a synthase cox15-like region spans residues 45–465 (NEINLSRTKN…AALSLAQRLH (421 aa)). Residues 46-97 (EINLSRTKNLFLNDCKFNKNSFEKFFARRLSNSVAPTPGGILQETEKIPSKK) lie on the Mitochondrial matrix side of the membrane. A helical transmembrane segment spans residues 98 to 118 (VAFWLLGSSALVLAIVVVGGI). At 119-182 (TRLTESGLSI…NIFFWEWFHR (64 aa)) the chain is on the mitochondrial intermembrane side. His181 lines the heme o pocket. Residues 183 to 203 (VLGRGIGLTILLPSIYMIVTK) traverse the membrane as a helical segment. At 204 to 212 (RASPWLSKR) the chain is on the mitochondrial matrix side. Residues 213 to 233 (LIGLTGLVGLQGVIGWWMVKS) traverse the membrane as a helical segment. The Mitochondrial intermembrane portion of the chain corresponds to 234 to 254 (GLSEELFSDGSHPRVSHYRLA). The helical transmembrane segment at 255–275 (THLAAAVALYIGLVWTGHGIL) threads the bilayer. Position 256 (His256) interacts with heme o. The Mitochondrial matrix segment spans residues 276–311 (QRHAFLKSMKSGSTSQLTSMVSSVQKMKGFRTSVNS). The chain crosses the membrane as a helical span at residues 312–332 (FVGLVLITLLSGAFVAGLDAG). Residues 333-380 (MIYCTFPEMGEGRLAPSKSELFDQRFCRKDDKSDLIWRNMIDNPSLVQ) are Mitochondrial intermembrane-facing. A helical membrane pass occupies residues 381–401 (LEHRILAITTFVAACGLFIFS). Residue His383 coordinates heme b. Residues 402–417 (RAKRNILPKKIKTSIN) are Mitochondrial matrix-facing. The chain crosses the membrane as a helical span at residues 418-438 (VVTGVVTAQATLGIMTLIYVV). Residue Pro439 is a topological domain, mitochondrial intermembrane. The helical transmembrane segment at 440 to 460 (VPLAALHQAGSLVTLTAALSL) threads the bilayer. His446 is a heme b binding site. The Mitochondrial matrix segment spans residues 461–616 (AQRLHPEYAL…RNIRLERPKA (156 aa)). Residues 502–606 (FRPSFHSEIK…GIRVRIPAQT (105 aa)) form the 2Fe-2S ferredoxin-type domain. Residues 516-616 (GTGIKVFFVT…RNIRLERPKA (101 aa)) form a mitochondrial ferredoxin yah1-like region. [2Fe-2S] cluster contacts are provided by Cys541, Cys547, Cys550, and Cys587.

This sequence in the N-terminal section; belongs to the COX15/CtaA family. Type 2 subfamily. In the C-terminal section; belongs to the adrenodoxin/putidaredoxin family. In terms of assembly, homodimer. The cofactor is heme b. [2Fe-2S] cluster serves as cofactor. The etp1 preprotein is cleaved into 2 chains after imort into mitochondria. The N-terminal chain containing a heme A synthase cox15-like domain etp1(cd) is a subunit of the membrane-embedded cytochrome c oxidase complex and functions in the respiratory chain. The C-terminal chain containing a ferredoxin yah1-like domain etp1(fd) is released and serves in the matrix as electron transfer protein.

Its subcellular location is the mitochondrion inner membrane. The protein localises to the mitochondrion matrix. It carries out the reaction Fe(II)-heme o + 2 A + H2O = Fe(II)-heme a + 2 AH2. It participates in porphyrin-containing compound metabolism; heme A biosynthesis; heme A from heme O: step 1/1. Functionally, catalyzes the second reaction in the biosynthesis of heme A, a prosthetic group of mitochondrial cytochrome c oxidase (CcO). Heme A is synthesized from heme B by two sequential enzymatic reactions catalyzed by heme O synthase (HOS) and heme A synthase (HAS). HAS catalyzes the conversion of heme O to heme A by two successive hydroxylations of the methyl group at C8, in a reaction that involves matrix ferredoxin and ferredoxin reductase. The first hydroxylation forms heme I, the second hydroxylation results in an unstable dihydroxymethyl group, which spontaneously dehydrates, resulting in the formyl group of heme A. Iron-sulfur protein that transfers electrons in a wide variety of metabolic reactions. Involved in heme A biosynthesis and in iron-sulfur cluster assembly. Transfers electrons from adrenodoxin reductase arh1 to heme A synthase etp1(cd), a heme protein that catalyzes the conversion of heme O to heme A. Required for the de novo synthesis of Fe-S clusters on iron sulfur cluster assembly protein isu1. Interact in its reduced state with isu1 to productively deliver electrons for Fe-S cluster synthesis. Essential for coenzyme Q biosynthesis. May transfer the electrons required for the hydroxylation reaction performed by coq6. The polypeptide is Heme A synthase-mitochondrial ferredoxin fusion protein (Schizosaccharomyces pombe (strain 972 / ATCC 24843) (Fission yeast)).